Reading from the N-terminus, the 462-residue chain is Tubulin gamma-1 chain (462 aa).

142–148 serves as a coordination point for GTP; it reads AGGTGSG.

Belongs to the tubulin family.

It localises to the cytoplasm. Its subcellular location is the cytoskeleton. It is found in the microtubule organizing center. The protein localises to the centrosome. In terms of biological role, tubulin is the major constituent of microtubules. The gamma chain is found at microtubule organizing centers (MTOC) such as the spindle poles or the centrosome, suggesting that it is involved in the minus-end nucleation of microtubule assembly. The polypeptide is Tubulin gamma-1 chain (Euplotes crassus).